We begin with the raw amino-acid sequence, 148 residues long: uncharacterized protein (148 aa).

This is an uncharacterized protein from Saccharomyces cerevisiae (strain ATCC 204508 / S288c) (Baker's yeast).